The chain runs to 252 residues: Hydroxyacylglutathione hydrolase (252 aa).

Residues His-54, His-56, Asp-58, His-59, His-111, Asp-128, and His-166 each contribute to the Zn(2+) site.

It belongs to the metallo-beta-lactamase superfamily. Glyoxalase II family. As to quaternary structure, monomer. Zn(2+) is required as a cofactor.

The enzyme catalyses an S-(2-hydroxyacyl)glutathione + H2O = a 2-hydroxy carboxylate + glutathione + H(+). Its pathway is secondary metabolite metabolism; methylglyoxal degradation; (R)-lactate from methylglyoxal: step 2/2. Functionally, thiolesterase that catalyzes the hydrolysis of S-D-lactoyl-glutathione to form glutathione and D-lactic acid. The polypeptide is Hydroxyacylglutathione hydrolase (Vibrio parahaemolyticus serotype O3:K6 (strain RIMD 2210633)).